A 413-amino-acid chain; its full sequence is DNA primase DnaG (413 aa).

The Toprim domain maps to 168 to 246 (PNLIIVEGRA…KIDYVARAPV (79 aa)). Mg(2+) is bound by residues E174, D219, and D221.

It belongs to the archaeal DnaG primase family. In terms of assembly, forms a ternary complex with MCM helicase and DNA. Component of the archaeal exosome complex. Mg(2+) is required as a cofactor.

The catalysed reaction is ssDNA + n NTP = ssDNA/pppN(pN)n-1 hybrid + (n-1) diphosphate.. In terms of biological role, RNA polymerase that catalyzes the synthesis of short RNA molecules used as primers for DNA polymerase during DNA replication. Also part of the exosome, which is a complex involved in RNA degradation. Acts as a poly(A)-binding protein that enhances the interaction between heteromeric, adenine-rich transcripts and the exosome. This Metallosphaera sedula (strain ATCC 51363 / DSM 5348 / JCM 9185 / NBRC 15509 / TH2) protein is DNA primase DnaG.